The primary structure comprises 145 residues: Class I hydrophobin rodE (145 aa).

Disulfide bonds link Cys-43–Cys-126, Cys-59–Cys-120, Cys-60–Cys-95, and Cys-127–Cys-140.

Belongs to the fungal hydrophobin family. Self-assembles to form functional amyloid fibrils called rodlets. Self-assembly into fibrillar rodlets occurs spontaneously at hydrophobic:hydrophilic interfaces and the rodlets further associate laterally to form amphipathic monolayers.

In terms of biological role, aerial growth, conidiation, and dispersal of filamentous fungi in the environment rely upon a capability of their secreting small amphipathic proteins called hydrophobins (HPBs) with low sequence identity. Class I can self-assemble into an outermost layer of rodlet bundles on aerial cell surfaces, conferring cellular hydrophobicity that supports fungal growth, development and dispersal; whereas Class II form highly ordered films at water-air interfaces through intermolecular interactions but contribute nothing to the rodlet structure. RodE is a class I hydrophobin that, unlike rodA, is not required for rodlet formation. This chain is Class I hydrophobin rodE, found in Aspergillus fumigatus (strain ATCC MYA-4609 / CBS 101355 / FGSC A1100 / Af293) (Neosartorya fumigata).